A 712-amino-acid polypeptide reads, in one-letter code: Polyadenylation factor subunit 2 (712 aa).

The interval 1–37 is disordered; it reads MTAPTVPADQHGHPLPGPADPAANDTWRPSRYREPLH. WD repeat units follow at residues 131–170, 173–213, 214–253, 256–295, 298–337, 340–380, and 387–426; these read KERSPTRVVRWTPDARRLLTGNDKGQFTLWNGASFNYESI, VHDD…HGFQ, GHREACHDVSWSPNDERFVTCGDDGLVKIWSYREAKEERS, GHGWDVRCVDWHPTKGLIVSGSKDMLVKFWDPRTGKDLST, SSKSTINTCRWSPDGHLVATAGQDSVIRLFDIRTFRELEV, GHEK…PSTP, and AHEDAVFSLSFHPLGHILCSGSKDFTARFWCRARPPGGQE. Disordered regions lie at residues 446-473 and 489-712; these read TKREWGTNAPPANAAGGGGGGGGDKQQV and KTGP…DGRR. Gly residues-rich tracts occupy residues 460-469 and 494-504; these read AGGGGGGGGD and TTGGGPSGLPG. Low complexity predominate over residues 533–545; it reads QGQAQGGQFPRGR. Positions 565–592 are enriched in basic and acidic residues; sequence FADRDRNGGGDRGGMDRDRDSRGGRQDP. 2 stretches are compositionally biased toward pro residues: residues 603–612 and 619–671; these read GGPPPGPPPG and PPAP…PQGP. The segment covering 678–712 has biased composition (gly residues); that stretch reads GGQGNYGASASGGYGQYGGGGGGGGGGGYGRDGRR.

The protein localises to the nucleus. Its function is as follows. Required for 3'-end cleavage and polyadenylation of pre-mRNAs. Also involved in chromosome segregation where it has a role in chromosome attachment to the mitotic spindle. In Cryptococcus neoformans var. neoformans serotype D (strain JEC21 / ATCC MYA-565) (Filobasidiella neoformans), this protein is Polyadenylation factor subunit 2 (PFS2).